Reading from the N-terminus, the 508-residue chain is 6-phosphogluconate dehydrogenase, decarboxylating 2, chloroplastic (508 aa).

A chloroplast-targeting transit peptide spans 1–12 (MASPAPAPPAAS). NADP(+)-binding positions include 28-33 (GLATMG), 51-53 (NRT), 95-97 (VQA), and Asn123. Substrate contacts are provided by residues Asn123 and 149–151 (SGG). The Proton acceptor role is filled by Lys203. 206 to 207 (HN) is a substrate binding site. The Proton donor role is filled by Glu210. Substrate-binding residues include Tyr211, Lys284, Arg311, Arg475, and His481.

Belongs to the 6-phosphogluconate dehydrogenase family. Homodimer.

The protein resides in the plastid. Its subcellular location is the chloroplast. The enzyme catalyses 6-phospho-D-gluconate + NADP(+) = D-ribulose 5-phosphate + CO2 + NADPH. It functions in the pathway carbohydrate degradation; pentose phosphate pathway; D-ribulose 5-phosphate from D-glucose 6-phosphate (oxidative stage): step 3/3. Functionally, catalyzes the oxidative decarboxylation of 6-phosphogluconate to ribulose 5-phosphate and CO(2), with concomitant reduction of NADP to NADPH. The polypeptide is 6-phosphogluconate dehydrogenase, decarboxylating 2, chloroplastic (G6PGH2) (Oryza sativa subsp. japonica (Rice)).